A 209-amino-acid polypeptide reads, in one-letter code: Thymidine kinase (209 aa).

ATP-binding positions include 25–32 (GCMFAGKT) and 103–106 (DEVQ). The active-site Proton acceptor is Glu104. Zn(2+) contacts are provided by Cys160, Cys163, Cys198, and Cys201.

It belongs to the thymidine kinase family. Homotetramer.

Its subcellular location is the cytoplasm. The enzyme catalyses thymidine + ATP = dTMP + ADP + H(+). In Mycoplasma capricolum subsp. capricolum (strain California kid / ATCC 27343 / NCTC 10154), this protein is Thymidine kinase.